Consider the following 670-residue polypeptide: uncharacterized protein (670 aa).

10 consecutive transmembrane segments (helical) span residues 23–42 (YALR…YYLN), 47–69 (YWAM…SKSL), 76–98 (LLGA…FFLL), 118–140 (VAYA…VNIT), 153–170 (VCEV…MMIL), 381–403 (QWDA…SAVA), 410–432 (SLLM…GLMV), 437–454 (LWQF…MQLL), 461–483 (FAAL…NPPV), and 493–510 (NLAK…FAIL).

This sequence belongs to the aromatic acid exporter ArAE (TC 2.A.85) family.

Its subcellular location is the cell membrane. This is an uncharacterized protein from Escherichia coli (strain K12).